The chain runs to 320 residues: Malate dehydrogenase (320 aa).

NAD(+) contacts are provided by residues 10–15 (GAGNIG) and Asp-34. Substrate-binding residues include Arg-83 and Arg-89. NAD(+) contacts are provided by residues Asn-96 and 119 to 121 (ITN). Residues Asn-121 and Arg-152 each coordinate substrate. Catalysis depends on His-176, which acts as the Proton acceptor.

Belongs to the LDH/MDH superfamily. MDH type 3 family.

The catalysed reaction is (S)-malate + NAD(+) = oxaloacetate + NADH + H(+). Functionally, catalyzes the reversible oxidation of malate to oxaloacetate. The sequence is that of Malate dehydrogenase from Rhizorhabdus wittichii (strain DSM 6014 / CCUG 31198 / JCM 15750 / NBRC 105917 / EY 4224 / RW1) (Sphingomonas wittichii).